The primary structure comprises 424 residues: MFDVVISDIEAREILDSRGYPTLCVKVITNTGTFGEACVPSGASTGIKEALELRDKDPKRYQGKGVLQAISNVEKVLMPALQGFSVFDQITADAIMIDADGTPNKEKLGANAILGVSLALAKAAANTLQRPLYRYLGGSFSHVLPCPMMNLINGGMHATNGLQFQEFMIRPISAPSLTEAVRMGAEVFNALKKILQNRQLATGVGDEGGFAPNLASNAEALDLLLTAIETAGFTPREDISLALDCAASSFYNTQDKTYDGKSYADQVGILAELCEHYPIDSIEDGLAEEDFEGWKLLSETLGDRVQLVGDDLFVTNSALIAEGIAQGLANAVLIKPNQIGTLTETAEAIRLATIQGYATILSHRSGETEDTTIADLAVAFNTGQIKTGSLSRSERIAKYNRLMAIEEEMGPEALFQDSNPFSKA.

Q165 serves as a coordination point for (2R)-2-phosphoglycerate. The active-site Proton donor is the E207. Residues D244, E283, and D310 each coordinate Mg(2+). Residues K335, R364, S365, and K386 each contribute to the (2R)-2-phosphoglycerate site. Catalysis depends on K335, which acts as the Proton acceptor.

This sequence belongs to the enolase family. Requires Mg(2+) as cofactor.

The protein localises to the cytoplasm. It is found in the secreted. Its subcellular location is the cell surface. The catalysed reaction is (2R)-2-phosphoglycerate = phosphoenolpyruvate + H2O. Its pathway is carbohydrate degradation; glycolysis; pyruvate from D-glyceraldehyde 3-phosphate: step 4/5. Catalyzes the reversible conversion of 2-phosphoglycerate (2-PG) into phosphoenolpyruvate (PEP). It is essential for the degradation of carbohydrates via glycolysis. The sequence is that of Enolase from Chlamydia trachomatis serovar D (strain ATCC VR-885 / DSM 19411 / UW-3/Cx).